The primary structure comprises 212 residues: Probable chemoreceptor glutamine deamidase CheD (212 aa).

This sequence belongs to the CheD family.

The enzyme catalyses L-glutaminyl-[protein] + H2O = L-glutamyl-[protein] + NH4(+). Its function is as follows. Probably deamidates glutamine residues to glutamate on methyl-accepting chemotaxis receptors (MCPs), playing an important role in chemotaxis. The polypeptide is Probable chemoreceptor glutamine deamidase CheD (Oleidesulfovibrio alaskensis (strain ATCC BAA-1058 / DSM 17464 / G20) (Desulfovibrio alaskensis)).